The sequence spans 662 residues: A-kinase anchor protein 10, mitochondrial (662 aa).

The N-terminal 28 residues, 1–28 (MRGAGPSPRQSPRTLRPDPGPAMSFFRR), are a transit peptide targeting the mitochondrion. The interval 1 to 55 (MRGAGPSPRQSPRTLRPDPGPAMSFFRRKVKGKEQEKTSDVKSIKASISVHSPQK) is disordered. The span at 32–43 (GKEQEKTSDVKS) shows a compositional bias: basic and acidic residues. Residues Ser52 and Ser189 each carry the phosphoserine modification. RGS domains lie at 125-369 (TLEQ…CKYQ) and 379-505 (YLAD…YKYL). The span at 261-280 (SMETQESSSTLTVASRNSPA) shows a compositional bias: polar residues. The tract at residues 261–282 (SMETQESSSTLTVASRNSPASP) is disordered. Ser281 carries the phosphoserine modification. The interval 524 to 548 (LTAPGSVGPPDESHPGSSDSSASQS) is disordered. Positions 634 to 647 (LAWKIAKMIVSDIM) are PKA-RII subunit binding.

It is found in the mitochondrion. The protein resides in the membrane. Its subcellular location is the cytoplasm. Its function is as follows. Differentially targeted protein that binds to type I and II regulatory subunits of protein kinase A and anchors them to the mitochondria or the plasma membrane. Although the physiological relevance between PKA and AKAPS with mitochondria is not fully understood, one idea is that BAD, a proapoptotic member, is phosphorylated and inactivated by mitochondria-anchored PKA. It cannot be excluded too that it may facilitate PKA as well as G protein signal transduction, by acting as an adapter for assembling multiprotein complexes. With its RGS domain, it could lead to the interaction to G-alpha proteins, providing a link between the signaling machinery and the downstream kinase. The sequence is that of A-kinase anchor protein 10, mitochondrial (AKAP10) from Homo sapiens (Human).